Consider the following 989-residue polypeptide: SWI/SNF-related matrix-associated actin-dependent regulator of chromatin subfamily A containing DEAD/H box 1 homolog (989 aa).

Residues 1-288 (MSTTSDFQTG…RRAKRGETKN (288 aa)) form a disordered region. Residues 72–105 (DDDDEDYVDETMPSEDEEDFDNNEEDEDDDDYEE) are compositionally biased toward acidic residues. The span at 109 to 120 (RKRKAPSKKKLV) shows a compositional bias: basic residues. The span at 124–140 (ENYRREDSETPEPEMKR) shows a compositional bias: basic and acidic residues. The segment covering 187–200 (DDESEDDFINDEEI) has biased composition (acidic residues). Composition is skewed to basic and acidic residues over residues 201–221 (SEKG…GKDS) and 241–250 (AQKEQKKKAE). The segment covering 251-276 (SDEDWEEDEDDMNADGDETPSDDSDI) has biased composition (acidic residues). The span at 277–288 (EERRAKRGETKN) shows a compositional bias: basic and acidic residues. The 169-residue stretch at 406 to 574 (IMMYNKDLNA…ISLMYFVLSK (169 aa)) folds into the Helicase ATP-binding domain. Residue 419-426 (DEMGLGKT) participates in ATP binding. The DEGH box motif lies at 525–528 (DEGH). Residues 757-912 (QLDVMLPEIQ…GVKGQLDEDA (156 aa)) enclose the Helicase C-terminal domain. The disordered stretch occupies residues 941-989 (RYDDVEDDSGDSKNGIDAEEAAKKEDEAVKEPVEKEQQKEEESQPSTSA). The span at 950-982 (GDSKNGIDAEEAAKKEDEAVKEPVEKEQQKEEE) shows a compositional bias: basic and acidic residues.

The protein belongs to the SNF2/RAD54 helicase family.

It localises to the nucleus. The protein localises to the chromosome. It catalyses the reaction ATP + H2O = ADP + phosphate + H(+). In terms of biological role, DNA helicase that possesses intrinsic ATP-dependent nucleosome-remodeling activity and is both required for DNA repair and heterochromatin organization. Promotes DNA end resection of double-strand breaks (DSBs) following DNA damage: probably acts by weakening histone DNA interactions in nucleosomes flanking DSBs. The sequence is that of SWI/SNF-related matrix-associated actin-dependent regulator of chromatin subfamily A containing DEAD/H box 1 homolog from Caenorhabditis elegans.